Consider the following 385-residue polypeptide: Trans-enoyl reductase poxH (385 aa).

Residue 64–67 (QPYS) coordinates NADP(+). 156–163 (PDPAAPPI) is a substrate binding site. Residues 199 to 202 (STSV), 223 to 226 (SGTD), Tyr-241, and 289 to 290 (LG) contribute to the NADP(+) site. 309-313 (HMAPL) is a binding site for substrate. 372 to 373 (KR) provides a ligand contact to NADP(+).

This sequence belongs to the zinc-containing alcohol dehydrogenase family. As to quaternary structure, monomer.

It participates in secondary metabolite biosynthesis. Functionally, trans-enoyl reductase; part of the gene cluster that mediates the biosynthesis of oxaleimides, cytotoxic compounds containing an unusual disubstituted succinimide moiety. The first step of the pathway is provided by the HR-PKS poxF that serves in a new mode of collaborative biosynthesis with the PKS-NRPS poxE, by providing the olefin containing amino acid substrate via the synthesis of an ACP-bound dec-4-enoate. The cytochrome P450 monooxygenase poxM-catalyzed oxidation at the alpha-position creates the enzyme-bound 2-hydroxydec-4-enoyl-ACP thioester, which may be prone to spontaneous hydrolysis to yield 2-hydroxydec-4-enoic acid due to increased electrophilicity of the carbonyl. 2-hydroxydec-4-enoic acid can then be further oxidized by poxM to yield the alpha-ketoacid 2-oxodec-4-enoicacid, which is reductively aminated by the aminotransferase poxL to yield (S,E)-2-aminodec-4-enoic acid. The Hybrid PKS-NRPS synthetase poxE then performs condensation between the octaketide product of its PKS modules and the amino group of (S,E)-2-aminodec-4-enoic acid which is activated and incorporated by the adenylation domain. The resulting aminoacyl product can be cyclized by the Diels-Alderase PoxQ and reductively released by the reductive (R) domain of poxE to yield an aldehyde intermediate. The released aldehyde is then substrate for a Knoevenagel condensation by the hydrolyase poxO followed by an oxidation at the 5-position of the pyrrolidone ring. The presence of the olefin from the amino acid building block allows for migration of the substituted allyl group to occur. This allylic transposition reaction takes place in a conjugate addition, semipinacol-like fashion to yield a succinimide intermediate. Iterative two-electron oxidations of the C7 methyl of the succinimide intermediate to the carboxylic acid can be catalyzed by one of two remaining cytochrome P450 monooxygenasess poxC or poxD to yield oxaleimide A. Subsequent oxidation yields the maleimide scaffold oxaleimide I. Both oxaleimide A and oxaleimide I can undergo oxidative modifications in the decalin ring to yield the series of products oxaleimides B to H. The sequence is that of Trans-enoyl reductase poxH from Penicillium oxalicum (strain 114-2 / CGMCC 5302) (Penicillium decumbens).